We begin with the raw amino-acid sequence, 241 residues long: 15,16-dihydrobiliverdin:ferredoxin oxidoreductase (241 aa).

The protein belongs to the HY2 family.

The enzyme catalyses 15,16-dihydrobiliverdin + oxidized 2[4Fe-4S]-[ferredoxin] = biliverdin IXalpha + reduced 2[4Fe-4S]-[ferredoxin] + 2 H(+). Catalyzes the two-electron reduction of biliverdin IX-alpha at the C15 methine bridge. The polypeptide is 15,16-dihydrobiliverdin:ferredoxin oxidoreductase (pebA) (Prochlorococcus marinus (strain SARG / CCMP1375 / SS120)).